Here is a 438-residue protein sequence, read N- to C-terminus: Chromosomal replication initiator protein DnaA (438 aa).

Residues 1–71 (MTELDSLWEA…VEIVYQRTGQ (71 aa)) form a domain I, interacts with DnaA modulators region. The interval 71-101 (QEIRPDYVLATDPTPLAQTPPRPQSTFKEET) is domain II. Residues 81–100 (TDPTPLAQTPPRPQSTFKEE) are disordered. The tract at residues 102–318 (PLNPEYTFQT…GALMRIRVFS (217 aa)) is domain III, AAA+ region. ATP contacts are provided by glycine 146, glycine 148, lysine 149, and threonine 150. The interval 319–438 (ELHQQPITLK…LVKLKNDLQA (120 aa)) is domain IV, binds dsDNA.

Belongs to the DnaA family. As to quaternary structure, oligomerizes as a right-handed, spiral filament on DNA at oriC.

The protein resides in the cytoplasm. Functionally, plays an essential role in the initiation and regulation of chromosomal replication. ATP-DnaA binds to the origin of replication (oriC) to initiate formation of the DNA replication initiation complex once per cell cycle. Binds the DnaA box (a 9 base pair repeat at the origin) and separates the double-stranded (ds)DNA. Forms a right-handed helical filament on oriC DNA; dsDNA binds to the exterior of the filament while single-stranded (ss)DNA is stabiized in the filament's interior. The ATP-DnaA-oriC complex binds and stabilizes one strand of the AT-rich DNA unwinding element (DUE), permitting loading of DNA polymerase. After initiation quickly degrades to an ADP-DnaA complex that is not apt for DNA replication. Binds acidic phospholipids. This is Chromosomal replication initiator protein DnaA from Limosilactobacillus fermentum (strain NBRC 3956 / LMG 18251) (Lactobacillus fermentum).